Reading from the N-terminus, the 350-residue chain is Methionine import ATP-binding protein MetN (350 aa).

The region spanning 2 to 241 is the ABC transporter domain; the sequence is IQIKNLKKEY…PQAPVTRSFV (240 aa). 38-45 serves as a coordination point for ATP; it reads GHSGAGKS.

The protein belongs to the ABC transporter superfamily. Methionine importer (TC 3.A.1.24) family. As to quaternary structure, the complex is composed of two ATP-binding proteins (MetN), two transmembrane proteins (MetI) and a solute-binding protein (MetQ).

It is found in the cell inner membrane. It catalyses the reaction L-methionine(out) + ATP + H2O = L-methionine(in) + ADP + phosphate + H(+). It carries out the reaction D-methionine(out) + ATP + H2O = D-methionine(in) + ADP + phosphate + H(+). In terms of biological role, part of the ABC transporter complex MetNIQ involved in methionine import. Responsible for energy coupling to the transport system. This Francisella tularensis subsp. holarctica (strain LVS) protein is Methionine import ATP-binding protein MetN.